We begin with the raw amino-acid sequence, 923 residues long: Protocadherin gamma-B4 (923 aa).

The signal sequence occupies residues 1 to 30 (MGSGAGELGRAERLPVLFLFLLSLFCPALC). Cadherin domains follow at residues 31-133 (EQIR…TPKF), 134-242 (TQNS…APVF), 243-345 (SQDV…APEV), 346-450 (IFQS…APVF), 451-560 (SQSS…APRV), and 568-673 (DGSA…LPDI). At 31 to 689 (EQIRYRIPEE…SDLQAELQFY (659 aa)) the chain is on the extracellular side. Residues N417 and N543 are each glycosylated (N-linked (GlcNAc...) asparagine). Residues 690 to 710 (LVVALALISVLFLVAMILAIA) traverse the membrane as a helical segment. The Cytoplasmic segment spans residues 711-923 (LRLRRSSSPA…KKKSGKKEKK (213 aa)). Disordered regions lie at residues 797-832 (SHQQ…WPNN) and 893-923 (ATLT…KEKK). Basic residues predominate over residues 913–923 (NKKKSGKKEKK).

It localises to the cell membrane. Its function is as follows. Potential calcium-dependent cell-adhesion protein. May be involved in the establishment and maintenance of specific neuronal connections in the brain. The protein is Protocadherin gamma-B4 (PCDHGB4) of Homo sapiens (Human).